A 314-amino-acid chain; its full sequence is Olfactory receptor 5P76 (314 aa).

Over 1-28 the chain is Extracellular; sequence MAFLEDGNHTAVTGFILLGLTDDPVLRV. Asn-8 carries N-linked (GlcNAc...) asparagine glycosylation. The helical transmembrane segment at 29–49 threads the bilayer; sequence VLFVIILCIYLVTVSGNLSTI. Residues 50-57 lie on the Cytoplasmic side of the membrane; sequence LLIRVSSQ. The helical transmembrane segment at 58 to 78 threads the bilayer; the sequence is LHHPMYFFLSHLASADIGYSS. The Extracellular portion of the chain corresponds to 79–102; that stretch reads SVTPNMLVNFLVERNTISYLGCGI. A disulfide bond links Cys-100 and Cys-192. A helical membrane pass occupies residues 103–123; sequence QLGSAVFFGTVECFLLAAMAY. Topologically, residues 124 to 136 are cytoplasmic; the sequence is DRFIAICSPLLYS. Residues 137-157 form a helical membrane-spanning segment; sequence NKMSTQVCVQLLVGSYIGGFL. The Extracellular segment spans residues 158-199; that stretch reads NASSFTLSFFSLVFCGPNRVNHFFCDFAPLVKLSCSDVSVPA. A helical membrane pass occupies residues 200–220; sequence VVPSFTAGSIIIVTIFVIAVS. The Cytoplasmic portion of the chain corresponds to 221 to 240; sequence YIYILITILKMRSTEGRQKA. The helical transmembrane segment at 241–261 threads the bilayer; that stretch reads FSTCTSHLTAVTLFYGTITFI. Topologically, residues 262 to 274 are extracellular; the sequence is YVMPKSSYSTDQN. Residues 275–295 form a helical membrane-spanning segment; that stretch reads KVVSVFYMVVVPMLNPLIYSL. Residues 296-314 are Cytoplasmic-facing; the sequence is RNKEIKGALKRQLAKNTFS.

This sequence belongs to the G-protein coupled receptor 1 family.

Its subcellular location is the cell membrane. In terms of biological role, potential odorant receptor. This chain is Olfactory receptor 5P76, found in Mus musculus (Mouse).